A 382-amino-acid chain; its full sequence is UDP-N-acetylglucosamine--N-acetylmuramyl-(pentapeptide) pyrophosphoryl-undecaprenol N-acetylglucosamine transferase (382 aa).

Residues 17 to 19 (TAG), asparagine 137, arginine 179, serine 213, and glutamine 308 each bind UDP-N-acetyl-alpha-D-glucosamine.

Belongs to the glycosyltransferase 28 family. MurG subfamily.

The protein localises to the cell membrane. It catalyses the reaction di-trans,octa-cis-undecaprenyl diphospho-N-acetyl-alpha-D-muramoyl-L-alanyl-D-glutamyl-meso-2,6-diaminopimeloyl-D-alanyl-D-alanine + UDP-N-acetyl-alpha-D-glucosamine = di-trans,octa-cis-undecaprenyl diphospho-[N-acetyl-alpha-D-glucosaminyl-(1-&gt;4)]-N-acetyl-alpha-D-muramoyl-L-alanyl-D-glutamyl-meso-2,6-diaminopimeloyl-D-alanyl-D-alanine + UDP + H(+). It functions in the pathway cell wall biogenesis; peptidoglycan biosynthesis. Functionally, cell wall formation. Catalyzes the transfer of a GlcNAc subunit on undecaprenyl-pyrophosphoryl-MurNAc-pentapeptide (lipid intermediate I) to form undecaprenyl-pyrophosphoryl-MurNAc-(pentapeptide)GlcNAc (lipid intermediate II). This Rhodococcus opacus (strain B4) protein is UDP-N-acetylglucosamine--N-acetylmuramyl-(pentapeptide) pyrophosphoryl-undecaprenol N-acetylglucosamine transferase.